We begin with the raw amino-acid sequence, 849 residues long: Aminopeptidase N (849 aa).

Substrate is bound by residues Glu-122 and 259–263; that span reads GAMEN. Zn(2+) is bound at residue His-294. The Proton acceptor role is filled by Glu-295. The Zn(2+) site is built by His-298 and Glu-317.

It belongs to the peptidase M1 family. In terms of assembly, monomer. Zn(2+) serves as cofactor.

It is found in the cytoplasm. The catalysed reaction is Release of an N-terminal amino acid, Xaa-|-Yaa- from a peptide, amide or arylamide. Xaa is preferably Ala, but may be most amino acids including Pro (slow action). When a terminal hydrophobic residue is followed by a prolyl residue, the two may be released as an intact Xaa-Pro dipeptide.. Functionally, aminopeptidase with broad substrate specificity to several peptides. It has more affinity for oligopeptides than for dipeptides. It plays an essential role in the metabolism, it may be involved in nitrogen supply or protein turnover. The sequence is that of Aminopeptidase N (pepN) from Lactococcus lactis subsp. lactis (Streptococcus lactis).